The primary structure comprises 350 residues: Glycerol-1-phosphate dehydrogenase [NAD(P)+] (350 aa).

NAD(+) is bound by residues 96–100 (GNIID) and 118–121 (TAPS). Asp123 provides a ligand contact to substrate. Ser127 is a binding site for NAD(+). Position 170 (Asp170) interacts with substrate. Zn(2+)-binding residues include Asp170 and His250. A substrate-binding site is contributed by His254. His266 provides a ligand contact to Zn(2+).

Belongs to the glycerol-1-phosphate dehydrogenase family. Homodimer. Requires Zn(2+) as cofactor.

Its subcellular location is the cytoplasm. It carries out the reaction sn-glycerol 1-phosphate + NAD(+) = dihydroxyacetone phosphate + NADH + H(+). It catalyses the reaction sn-glycerol 1-phosphate + NADP(+) = dihydroxyacetone phosphate + NADPH + H(+). Its pathway is membrane lipid metabolism; glycerophospholipid metabolism. In terms of biological role, catalyzes the NAD(P)H-dependent reduction of dihydroxyacetonephosphate (DHAP or glycerone phosphate) to glycerol 1-phosphate (G1P). The G1P thus generated is used as the glycerophosphate backbone of phospholipids in the cellular membranes of Archaea. This is Glycerol-1-phosphate dehydrogenase [NAD(P)+] from Sulfurisphaera tokodaii (strain DSM 16993 / JCM 10545 / NBRC 100140 / 7) (Sulfolobus tokodaii).